The following is a 230-amino-acid chain: Flagellar L-ring protein (230 aa).

The signal sequence occupies residues 1–15 (MSRPPLLSSACLAAT). Residue Cys16 is the site of N-palmitoyl cysteine attachment. Cys16 carries the S-diacylglycerol cysteine lipid modification.

Belongs to the FlgH family. As to quaternary structure, the basal body constitutes a major portion of the flagellar organelle and consists of four rings (L,P,S, and M) mounted on a central rod.

Its subcellular location is the cell outer membrane. It is found in the bacterial flagellum basal body. Functionally, assembles around the rod to form the L-ring and probably protects the motor/basal body from shearing forces during rotation. The polypeptide is Flagellar L-ring protein (Xanthomonas oryzae pv. oryzae (strain MAFF 311018)).